The following is a 713-amino-acid chain: Cyclomaltodextrin glucanotransferase (713 aa).

The N-terminal stretch at 1 to 27 (MKRFMKLTAVWTLWLSLTLGLLSPVHA) is a signal peptide. The A1 stretch occupies residues 28–165 (APDTSVSNKQ…NIKVIIDFAP (138 aa)). Positions 54, 56, 59, and 60 each coordinate Ca(2+). A disulfide bridge connects residues Cys-70 and Cys-77. Residues Gly-78 and Asp-80 each contribute to the Ca(2+) site. 127–128 (YW) provides a ligand contact to substrate. Ca(2+) is bound at residue Asn-166. Positions 166–229 (NHTSPASSDD…NLYDLADLNH (64 aa)) are b. His-167 contacts substrate. Ile-217 lines the Ca(2+) pocket. 220–223 (NLYD) contributes to the substrate binding site. Asp-226 contributes to the Ca(2+) binding site. The interval 230–433 (NNSSVDVYLK…LRKSNPAIAY (204 aa)) is A2. Arg-254 contacts substrate. Residue Asp-256 is the Nucleophile of the active site. Position 259 to 260 (259 to 260 (KH)) interacts with substrate. His-260 is a Ca(2+) binding site. Catalysis depends on Glu-284, which acts as the Proton donor. 3 residues coordinate substrate: His-354, Asp-398, and Arg-402. The tract at residues 434 to 522 (GSTHERWINN…GTAVWQYTTD (89 aa)) is c. The interval 523–609 (ATTPIIGNVG…SNIYDNFEVL (87 aa)) is d. Positions 526 to 607 (PIIGNVGPMM…AASNIYDNFE (82 aa)) constitute an IPT/TIG domain. The 106-residue stretch at 608–713 (VLTGDQVTVR…TATVNVNWQP (106 aa)) folds into the CBM20 domain. The tract at residues 610-713 (TGDQVTVRFV…TATVNVNWQP (104 aa)) is e.

The protein belongs to the glycosyl hydrolase 13 family. Monomer. It depends on Ca(2+) as a cofactor.

Its subcellular location is the secreted. The enzyme catalyses Cyclizes part of a (1-&gt;4)-alpha-D-glucan chain by formation of a (1-&gt;4)-alpha-D-glucosidic bond.. This chain is Cyclomaltodextrin glucanotransferase (cgt), found in Bacillus sp. (strain 1011).